The following is a 300-amino-acid chain: MENYVPFLVSHWRTVGLISVSIAAGVALGQLNQTHERAANKSQRVHTNSSIKAKQVKRESAIEQINEIEDDDEQSLEDQDVLPILFQYEKPSEADSIRRSEEFYRRMNQRRSVREISSDPVALEVIENIIKTGGTSPSGAHTEPWTFVVVSNLEMKQQIRQIIEAEEEINYKQRMGDVWVQDLQPVGTTWVKEYLTEAPWLILIFKQVHGFKRNGQKKIHYYNEISVSIATGFLLAAIQEAGLVTVTTTPLNCGPSIRVLLGRPVNEKLLLLLPVGYPKVGATVPDFKRKPLHDIMVHYQ.

The helical transmembrane segment at valine 15–leucine 31 threads the bilayer. FMN contacts are provided by residues arginine 110–arginine 114, serine 138, and serine 138–glycine 139. Positions 140, 167, 171, and 192 each coordinate 3,5-diiodo-L-tyrosine. 3-iodo-L-tyrosine-binding residues include alanine 140, glutamate 167, tyrosine 171, and lysine 192. FMN contacts are provided by residues threonine 247–threonine 249 and arginine 289.

This sequence belongs to the nitroreductase family. It depends on FMN as a cofactor. Post-translationally, may be cleaved at Gln-55. The cleaved form retains catalytic activity.

The protein localises to the membrane. The enzyme catalyses 2 iodide + L-tyrosine + 2 NADP(+) = 3,5-diiodo-L-tyrosine + 2 NADPH + H(+). It carries out the reaction iodide + L-tyrosine + NADP(+) = 3-iodo-L-tyrosine + NADPH. The catalysed reaction is 3-iodo-L-tyrosine + iodide + NADP(+) = 3,5-diiodo-L-tyrosine + NADPH + H(+). It catalyses the reaction L-tyrosine + chloride + NADP(+) = 3-chloro-L-tyrosine + NADPH. The enzyme catalyses bromide + L-tyrosine + NADP(+) = 3-bromo-L-tyrosine + NADPH. Functionally, catalyzes the dehalogenation of halotyrosines such as 3,5-diiodo-L-tyrosine. Likely to also catalyze the dehalogenation of other halotyrosines such as 3-bromo-L-tyrosine, 3-chloro-L-tyrosine and 3-iodo-L-tyrosine. The chain is Iodotyrosine deiodinase from Daphnia pulex (Water flea).